The following is a 96-amino-acid chain: Aspartyl/glutamyl-tRNA(Asn/Gln) amidotransferase subunit C (96 aa).

The protein belongs to the GatC family. Heterotrimer of A, B and C subunits.

The enzyme catalyses L-glutamyl-tRNA(Gln) + L-glutamine + ATP + H2O = L-glutaminyl-tRNA(Gln) + L-glutamate + ADP + phosphate + H(+). The catalysed reaction is L-aspartyl-tRNA(Asn) + L-glutamine + ATP + H2O = L-asparaginyl-tRNA(Asn) + L-glutamate + ADP + phosphate + 2 H(+). Allows the formation of correctly charged Asn-tRNA(Asn) or Gln-tRNA(Gln) through the transamidation of misacylated Asp-tRNA(Asn) or Glu-tRNA(Gln) in organisms which lack either or both of asparaginyl-tRNA or glutaminyl-tRNA synthetases. The reaction takes place in the presence of glutamine and ATP through an activated phospho-Asp-tRNA(Asn) or phospho-Glu-tRNA(Gln). The protein is Aspartyl/glutamyl-tRNA(Asn/Gln) amidotransferase subunit C of Bacillus cytotoxicus (strain DSM 22905 / CIP 110041 / 391-98 / NVH 391-98).